An 89-amino-acid polypeptide reads, in one-letter code: UPF0335 protein Caul_0876 (89 aa).

It belongs to the UPF0335 family.

The protein is UPF0335 protein Caul_0876 of Caulobacter sp. (strain K31).